Here is a 405-residue protein sequence, read N- to C-terminus: Riboflavin biosynthesis protein RibBA (405 aa).

Residues 1–205 (MSEIQLNTIE…IKDLIAYRLR (205 aa)) are DHBP synthase. Residues 30–31 (RE), Asp-35, 144–148 (RAGHT), and Glu-168 contribute to the D-ribulose 5-phosphate site. Glu-31 is a binding site for Mg(2+). A Mg(2+)-binding site is contributed by His-147. A GTP cyclohydrolase II region spans residues 206 to 405 (TESIVENGVE…RMGHVLHNIK (200 aa)). 256 to 260 (RVHSS) contributes to the GTP binding site. Positions 261, 272, and 274 each coordinate Zn(2+). GTP is bound by residues Gln-277, 299 to 301 (EGR), and Thr-321. Asp-333 serves as the catalytic Proton acceptor; for GTP cyclohydrolase activity. Arg-335 serves as the catalytic Nucleophile; for GTP cyclohydrolase activity. GTP is bound by residues Ser-356 and Lys-361.

It in the N-terminal section; belongs to the DHBP synthase family. This sequence in the C-terminal section; belongs to the GTP cyclohydrolase II family. Requires Mg(2+) as cofactor. It depends on Mn(2+) as a cofactor. Zn(2+) is required as a cofactor.

It catalyses the reaction D-ribulose 5-phosphate = (2S)-2-hydroxy-3-oxobutyl phosphate + formate + H(+). The enzyme catalyses GTP + 4 H2O = 2,5-diamino-6-hydroxy-4-(5-phosphoribosylamino)-pyrimidine + formate + 2 phosphate + 3 H(+). It functions in the pathway cofactor biosynthesis; riboflavin biosynthesis; 2-hydroxy-3-oxobutyl phosphate from D-ribulose 5-phosphate: step 1/1. It participates in cofactor biosynthesis; riboflavin biosynthesis; 5-amino-6-(D-ribitylamino)uracil from GTP: step 1/4. In terms of biological role, catalyzes the conversion of D-ribulose 5-phosphate to formate and 3,4-dihydroxy-2-butanone 4-phosphate. Its function is as follows. Catalyzes the conversion of GTP to 2,5-diamino-6-ribosylamino-4(3H)-pyrimidinone 5'-phosphate (DARP), formate and pyrophosphate. This is Riboflavin biosynthesis protein RibBA from Parabacteroides distasonis (strain ATCC 8503 / DSM 20701 / CIP 104284 / JCM 5825 / NCTC 11152).